The primary structure comprises 158 residues: uncharacterized protein (158 aa).

This sequence belongs to the mimivirus L223/L227/L812 family.

This is an uncharacterized protein from Acanthamoeba polyphaga mimivirus (APMV).